The following is a 2181-amino-acid chain: MQNSHFSFDTASGTFEDVTGTKVKIVEYPRSVNNGVYDSSTHLEILNLQGEIEILRSFNEYQIRAAKQQLGLDIVYELQGNVQTTSKNDFDSRGNNGNMTFNYYANTYQNSVDFSTSSSASGAGPGNSRGGLAGLLTNFSGILNPLGYLKDHNTEEMENSADRVTTQTAGNTAINTQSSLGVLCAYVEDPTKSDPPSSSTDQPTTTFTAIDRWYTGRLNSWTKAVKTFSFQAVPLPGAFLSRQGGLNGGAFTATLHRHFLMKCGWQVQVQCNLTQFHQGALLVAMVPETTLDVKPDGKAKSLQELNEEQWVEMSDDYRTGKNMPFQSLGTYYRPPNWTWGPNFINPYQVTVFPHQILNARTSTSVDINVPYIGETPTQSSETQNSWTLLVMVLVPLDYKEGATTDPEITFSVRPTSPYFNGLRNRYTAGTDEEQGPIPTAPRENSLMFLSTLPDDTVPAYGNVRTPPVNYLPGEITDLLQLARIPTLMAFERVPEPVPASDTYVPYVAVPTQFDDRPLISFPITLSDPVYQNTLVGAISSNFANYRGCIQITLTFCGPMMARGKFLLSYSPPNGTQPQTLSEAMQCTYSIWDIGLNSSWTFVVPYISPSDYRETRAITNSVYSADGWFSLHKLTKITLPPDCPQSPCILFFASAGEDYTLRLPVDCNPSYVFHSTDNAETGVIEAGNTDTDFSGELAAPGSNHTNVKFLFDRSRLLNVIKVLEKDAVFPRPFPTQEGAQQDDGYFCLLTPRPTVASRPATRFGLYANPSGSGVLANTSLDFNFYSLACFTYFRSDLEVTVVSLEPDLEFAVGWFPSGSEYQASSFVYDQLHVPFHFTGRTPRAFASKGGKVSFVLPWNSVSSVLPVRWGGASKLSSATRGLPAHADWGTIYAFVPRPNEKKSTAVKHVAVYIRYKNARAWCPSMLPFRSYKQKMLMQSGDIETNPGPASDNPILEFLEAENDLVTLASLWKMVHSVQQTWRKYVKNDDFWPNLLSELVGEGSVALAATLSNQASVKALLGLHFLSRGLNYTDFYSLLIEKCSSFFTVEPPPPPAENLMTKPSVKSKFRKLFKMQGPMDKVKDWNQIAAGLKNFQFVRDLVKEVVDWLQAWINKEKASPVLQYQLEMKKLGPVALAHDAFMAGSGPPLSDDQIEYLQNLKSLALTLGKTNLAQSLTTMINAKQSSAQRVEPVVVVLRGKPGCGKSLASTLIAQAVSKRLYGSQSVYSLPPDPDFFDGYKGQFVTLMDDLGQNPDGQDFSTFCQMVSTAQFLPNMADLAEKGRPFTSNLIIATTNLPHFSPVTIADPSAVSRRINYDLTLEVSEAYKKHTRLNFDLAFRRTDAPPIYPFAAHVPFVDVAVRFKNGHQNFNLLELVDSICTDIRAKQQGARNMQTLVLQSPNENDDTPVDEALGRVLSPAAVDEALVDLTPEADPVGRLAILAKLGLALAAVTPGLIILAVGLYRYFSGSDADQEETESEGSVKAPRSENAYDGPKKNSKPPGALSLMEMQQPNVDMGFEAAVAKKVVVPITFMVPNRPSGLTQSALLVTGRTFLINEHTWSNPSWTSFTIRGEVHTRDEPFQTVHFTHHGIPTDLMMVRLGPGNSFPNNLDKFGLDQMPARNSRVVGVSSSYGNFFFSGNFLGFVDSITSEQGTYARLFRYRVTTYKGWCGSALVCEAGGVRRIIGLHSAGAAGIGAGTYISKLGLIKALKHLGEPLATMQGLMTELEPGITVHVPRKSKLRKTTAHAVYKPEFEPAVLSKFDPRLNKDVDLDEVIWSKHTANVPYQPPLFYTYMSEYAHRVFSFLGKDNDILTVKEAILGIPGLDPMDPHTAPGLPYAINGLRRTDLVDFVNGTVDAALAVQIQKFLDGDYSDHVFQTFLKDEIRPSEKVRAGKTRIVDVPSLAHCIVGRMLLGRFAAKFQSHPGFLLGSAIGSDPDVFWTVIGAQLEGRKNTYDVDYSAFDSSHGTGSFEALISHFFTVDNGFSPALGPYLRSLAVSVHAYGERRIKITGGLPSGCAATSLLNTVLNNVIIRTALALTYKEFEYDMVDIIAYGDDLLVGTDYDLDFNEVARRAAKLGYKMTPANKGSVFPPTSSLSDAVFLKRKFVQNNDGLYKPVMDLKNLEAMLSYFKPGTLLEKLQSVSMLAQHSGKEEYDRLMHPFADYGAVPSHEYLQARWRALFD.

Residue Gly-80 is the site of N-myristoyl glycine; by host attachment. Interaction with host receptor ANTXR1 stretches follow at residues 316–337 (DYRTGKNMPFQSLGTYYRPPNW) and 761–772 (RFGLYANPSGSG). An SF3 helicase domain is found at 1165-1333 (LGKTNLAQSL…YKKHTRLNFD (169 aa)). 1197–1204 (GKPGCGKS) is a binding site for ATP. Residues 1472–1500 (EETESEGSVKAPRSENAYDGPKKNSKPPG) form a disordered region. Tyr-1489 is modified (O-(5'-phospho-RNA)-tyrosine). The Peptidase C3 domain maps to 1511–1704 (NVDMGFEAAV…AGTYISKLGL (194 aa)). The active-site For protease 3C activity and deubiquitinase activity is His-1556. Asp-1592 acts as the For protease 3C activity in catalysis. Cys-1668 serves as the catalytic For protease 3C activity and deubiquitinase activity. The RdRp catalytic domain occupies 1950–2068 (KNTYDVDYSA…GTDYDLDFNE (119 aa)). Active-site for RdRp activity residues include Asp-1956 and Asp-2054.

In terms of assembly, interacts with host entry receptor ANTRX1. Interacts with host IRF3; this interaction is involved in the suppression of IRF3 and IRF7 expression and phosphorylation by the virus. Interacts with host IRF7; this interaction is involved in the suppression of IRF3 and IRF7 expression and phosphorylation by the virus. Interacts with host MAVS; this interaction allows the cleavage of MAVS and subsequent suppression of host immunity. Interacts with host TRIF; this interaction allows the cleavage of TRIF and subsequent suppression of host immunity. Interacts with host TANK; this interaction allows the cleavage of TANK and subsequent suppression of host immunity. Interacts with host RIGI. Interacts with host TBK1. Interacts with host TRAF3. Post-translationally, specific enzymatic cleavages by the viral protease in vivo yield a variety of precursors and mature proteins. The polyprotein seems to be cotranslationally cleaved at the 2A/2B junction by a ribosomal skip from one codon to the next without formation of a peptide bond. This process would release the P1-2A peptide from the translational complex. In terms of processing, during virion maturation, immature virions are rendered infectious following cleavage of VP0 into VP4 and VP2. This maturation seems to be an autocatalytic event triggered by the presence of RNA in the capsid and is followed by a conformational change of the particle. Myristoylation is required during RNA encapsidation and formation of the mature virus particle. Post-translationally, uridylylated by the polymerase and is covalently linked to the 5'-end of genomic RNA. This uridylylated form acts as a nucleotide-peptide primer for the polymerase.

Its subcellular location is the virion. It localises to the host cytoplasm. It is found in the host nucleus. The protein localises to the host nucleolus. The protein resides in the host cytoplasmic vesicle membrane. It catalyses the reaction RNA(n) + a ribonucleoside 5'-triphosphate = RNA(n+1) + diphosphate. It carries out the reaction Selective cleavage of Gln-|-Gly bond in the poliovirus polyprotein. In other picornavirus reactions Glu may be substituted for Gln, and Ser or Thr for Gly.. The catalysed reaction is Thiol-dependent hydrolysis of ester, thioester, amide, peptide and isopeptide bonds formed by the C-terminal Gly of ubiquitin (a 76-residue protein attached to proteins as an intracellular targeting signal).. The enzyme catalyses ATP + H2O = ADP + phosphate + H(+). Its function is as follows. Forms an icosahedral capsid of pseudo T=3 symmetry with capsid proteins VP2 and VP3. Together they form an icosahedral capsid composed of 60 copies of each VP1, VP2, and VP3, with a diameter of approximately 325 Angstroms. VP4 lies on the inner surface of the protein shell formed by VP1, VP2 and VP3. All the three latter proteins contain a beta-sheet structure called beta-barrel jelly roll. VP1 is situated at the 12 fivefold axes, whereas VP2 and VP3 are located at the quasi-sixfold axes. Binds the host receptor ANTXR1 for attachment and uncoating (entry). Functionally, forms an icosahedral capsid of pseudo T=3 symmetry with capsid proteins VP2 and VP3. Together they form an icosahedral capsid composed of 60 copies of each VP1, VP2, and VP3, with a diameter of approximately 270 Angstroms. VP4 lies on the inner surface of the protein shell formed by VP1, VP2 and VP3. All the three latter proteins contain a beta-sheet structure called beta-barrel jelly roll. VP1 is situated at the 12 fivefold axes, whereas VP2 and VP3 are located at the quasi-sixfold axes. Binds the host receptor ANTXR1 for attachment and uncoating (entry). Forms an icosahedral capsid of pseudo T=3 symmetry with capsid proteins VP2 and VP3. Together they form an icosahedral capsid composed of 60 copies of each VP1, VP2, and VP3, with a diameter of approximately 270 Angstroms. VP4 lies on the inner surface of the protein shell formed by VP1, VP2 and VP3. All the three latter proteins contain a beta-sheet structure called beta-barrel jelly roll. VP1 is situated at the 12 fivefold axes, whereas VP2 and VP3 are located at the quasi-sixfold axes. Vp3 also seems to be involved in the binding to host receptor ANTXR1 for attachment and uncoating (entry). In terms of biological role, lies on the inner surface of the capsid shell. After binding to the host receptor, the capsid undergoes conformational changes. Capsid protein VP4 is released, capsid protein VP1 N-terminus is externalized, and together, they shape a pore in the host membrane through which the viral genome is translocated into the host cell cytoplasm. After genome has been released, the channel shrinks. Its function is as follows. VP0 precursor is a component of immature procapsids. Functionally, mediates self-processing of the polyprotein by a translational effect termed 'ribosome skipping'. Mechanistically, 2A-mediated cleavage occurs between the C-terminal glycine and the proline of the downstream protein 2B. Plays an essential role in the virus replication cycle by acting as a viroporin. Creates a pore in the host endoplasmic reticulum and as a consequence releases Ca2+ in the cytoplasm of infected cell. In turn, high levels of cytoplasmic calcium may trigger membrane trafficking and transport of viral ER-associated proteins to viroplasms, sites of viral genome replication. In terms of biological role, associates with and induces structural rearrangements of intracellular membranes. Its function is as follows. Covalently linked to the 5'-end of both the positive-strand and negative-strand genomic RNAs. Acts as a genome-linked replication primer. Functionally, cysteine protease that generates mature viral proteins from the precursor polyprotein. Inactivates crucial host adapter molecules in order to suppress antiviral type-I interferon (type-I IFN) and NF-kappaB production to escape host antiviral innate immune responses. Deubiquitinase that acts on both lysine-48- and lysine-63-linked polyubiquitin chains and inhibits the ubiquitination of the ATP-dependent RNA helicase RIGI, TANK-binding kinase 1 (TBK1), and TNF receptor-associated factor 3 (TRAF3), thereby blocking the expression of IFN-beta and IFN stimulated gene 54 (ISG54). Induces host IRF3 and IRF7 degradation thereby suppressing IRF3- and IRF7-induced type-I IFN production. Also decreases host IRF3 phosphorylation leading to negligible IRF3 activation. Cleaves host MAVS, TRIF and TANK, which are then unable to regulate pattern recognition receptor (PRR)-mediated type-I IFN production. Inhibits the integrated stress response (ISR) in the infected cell by disrupting eIF4GI-G3BP1 interaction. Stress granule formation is thus inhibited. Replicates the genomic and antigenomic RNAs by recognizing replications specific signals. Performs VPg uridylylation. This chain is Genome polyprotein, found in Sus scrofa (Pig).